The sequence spans 746 residues: Polyphosphate kinase (746 aa).

The span at 1–17 (MRQPNTQAEAQHTQPSV) shows a compositional bias: polar residues. The disordered stretch occupies residues 1–60 (MRQPNTQAEAQHTQPSVGSIAAHRPNTVAATVSGLEPDIDADLDAYEESEESQDGGARLP). Acidic residues predominate over residues 37–53 (PDIDADLDAYEESEESQ). Asparagine 102 is an ATP binding site. Residues arginine 429 and arginine 459 each coordinate Mg(2+). Histidine 489 (phosphohistidine intermediate) is an active-site residue. Positions 522, 618, and 646 each coordinate ATP.

It belongs to the polyphosphate kinase 1 (PPK1) family. Mg(2+) serves as cofactor. Post-translationally, an intermediate of this reaction is the autophosphorylated ppk in which a phosphate is covalently linked to a histidine residue through a N-P bond.

It carries out the reaction [phosphate](n) + ATP = [phosphate](n+1) + ADP. Functionally, catalyzes the reversible transfer of the terminal phosphate of ATP to form a long-chain polyphosphate (polyP). This is Polyphosphate kinase from Streptomyces coelicolor (strain ATCC BAA-471 / A3(2) / M145).